A 158-amino-acid polypeptide reads, in one-letter code: Cyclic pyranopterin monophosphate synthase (158 aa).

Substrate contacts are provided by residues 76 to 78 (LCH) and 114 to 115 (ME). Aspartate 129 is an active-site residue.

It belongs to the MoaC family. Homohexamer; trimer of dimers.

It carries out the reaction (8S)-3',8-cyclo-7,8-dihydroguanosine 5'-triphosphate = cyclic pyranopterin phosphate + diphosphate. It functions in the pathway cofactor biosynthesis; molybdopterin biosynthesis. Functionally, catalyzes the conversion of (8S)-3',8-cyclo-7,8-dihydroguanosine 5'-triphosphate to cyclic pyranopterin monophosphate (cPMP). The polypeptide is Cyclic pyranopterin monophosphate synthase (Shewanella frigidimarina (strain NCIMB 400)).